The sequence spans 148 residues: Lysozyme C (148 aa).

A signal peptide spans 1–18 (MKALTILGLVLLSVTVQG). In terms of domain architecture, C-type lysozyme spans 19-148 (KIFERCELAR…VSQYVKGCGV (130 aa)). Cystine bridges form between C24/C146, C48/C134, C83/C99, and C95/C113. Residues E53 and D71 contribute to the active site.

The protein belongs to the glycosyl hydrolase 22 family. As to quaternary structure, monomer.

Its subcellular location is the secreted. It catalyses the reaction Hydrolysis of (1-&gt;4)-beta-linkages between N-acetylmuramic acid and N-acetyl-D-glucosamine residues in a peptidoglycan and between N-acetyl-D-glucosamine residues in chitodextrins.. Lysozymes have primarily a bacteriolytic function; those in tissues and body fluids are associated with the monocyte-macrophage system and enhance the activity of immunoagents. Also plays a role in digestion in this species. In Semnopithecus entellus (Northern plains gray langur), this protein is Lysozyme C (LYZ).